The sequence spans 306 residues: uncharacterized protein (306 aa).

This is an uncharacterized protein from Escherichia coli (strain K12).